The following is a 157-amino-acid chain: Small ribosomal subunit protein bS16 (157 aa).

The tract at residues 114 to 157 (NEGPTAEAITEKKKKAKEEAAAKAAAEAEAAAKAEEAPAEEAAE) is disordered.

It belongs to the bacterial ribosomal protein bS16 family.

This is Small ribosomal subunit protein bS16 from Corynebacterium diphtheriae (strain ATCC 700971 / NCTC 13129 / Biotype gravis).